Reading from the N-terminus, the 227-residue chain is 2,3-bisphosphoglycerate-dependent phosphoglycerate mutase (227 aa).

Substrate-binding positions include 7–14, 20–21, arginine 59, 86–89, lysine 97, 113–114, and 182–183; these read RHGQSEWN, TG, ERHY, RR, and GN. Histidine 8 acts as the Tele-phosphohistidine intermediate in catalysis. Residue glutamate 86 is the Proton donor/acceptor of the active site.

This sequence belongs to the phosphoglycerate mutase family. BPG-dependent PGAM subfamily. Homodimer.

It carries out the reaction (2R)-2-phosphoglycerate = (2R)-3-phosphoglycerate. Its pathway is carbohydrate degradation; glycolysis; pyruvate from D-glyceraldehyde 3-phosphate: step 3/5. Catalyzes the interconversion of 2-phosphoglycerate and 3-phosphoglycerate. The polypeptide is 2,3-bisphosphoglycerate-dependent phosphoglycerate mutase (Neisseria meningitidis serogroup C / serotype 2a (strain ATCC 700532 / DSM 15464 / FAM18)).